The following is a 706-amino-acid chain: Acyl-coenzyme A oxidase (706 aa).

Positions 682 to 706 (MLNRPSKEERERFEKSTETAKILSK) are disordered. Over residues 686–699 (PSKEERERFEKSTE) the composition is skewed to basic and acidic residues.

It belongs to the acyl-CoA oxidase family. Requires FAD as cofactor.

Its subcellular location is the peroxisome. It catalyses the reaction a 2,3-saturated acyl-CoA + O2 = a (2E)-enoyl-CoA + H2O2. It functions in the pathway lipid metabolism; peroxisomal fatty acid beta-oxidation. In Debaryomyces hansenii (strain ATCC 36239 / CBS 767 / BCRC 21394 / JCM 1990 / NBRC 0083 / IGC 2968) (Yeast), this protein is Acyl-coenzyme A oxidase (POX1).